A 1385-amino-acid polypeptide reads, in one-letter code: Defecation cycle abnormal dec-7 (1385 aa).

A signal peptide spans M1–S19. N-linked (GlcNAc...) asparagine glycosylation is present at N156. The segment at S234 to Y262 is disordered. Over residues N242–Q261 the composition is skewed to low complexity. Residues Q285–V450 form the NIDO domain. N313, N386, N413, N458, N480, N562, and N583 each carry an N-linked (GlcNAc...) asparagine glycan. The 160-residue stretch at G681–R840 folds into the AMOP domain. The VWFD domain occupies A852 to K1088. N-linked (GlcNAc...) asparagine glycosylation is found at N909, N921, N975, N1009, and N1124. In terms of domain architecture, Sushi spans I1179–D1238. Disulfide bonds link C1181/C1223 and C1209/C1236. Residue N1225 is glycosylated (N-linked (GlcNAc...) asparagine). The helical transmembrane segment at L1251–I1271 threads the bilayer. A disordered region spans residues M1321 to I1385.

In terms of tissue distribution, highly expressed in the intestinal epithelia.

The protein localises to the membrane. It localises to the cell junction. Its function is as follows. May negatively regulate activity of innexin gap junction protein inx-16, thereby mediating the rhythmic frequency of the defecation motor program. Required for the clustering of inx-16 to the cell-cell junction of the intestinal epithelia. Probably dispensable for intestinal integrity. May be a cytokine receptor. This chain is Defecation cycle abnormal dec-7, found in Caenorhabditis elegans.